The sequence spans 1394 residues: ATP-dependent permease AUS1 (1394 aa).

Topologically, residues 1–420 are cytoplasmic; the sequence is MSISKYFTPV…PLTTIGSYSR (420 aa). The ABC transporter 1 domain occupies 33 to 273; sequence KKSYDAEDSM…FRDTLGIEKD (241 aa). 6 helical membrane passes run 421-443, 468-490, 497-519, 529-551, 558-575, and 636-658; these read GSLT…PIAF, TVFD…YFLA, ARFF…LFAL, VANL…VIYL, FVWI…EAIL, and VWRN…LFAS. Residues 659 to 1080 lie on the Cytoplasmic side of the membrane; the sequence is QYIKPYFNKD…QYICTKRDMT (422 aa). In terms of domain architecture, ABC transporter 2 spans 751-978; the sequence is ISWKNINYTV…YFMSHDNTLV (228 aa). 782 to 789 contacts ATP; sequence GESGAGKT. 6 helical membrane passes run 1081 to 1103, 1107 to 1129, 1156 to 1178, 1193 to 1215, 1224 to 1246, and 1346 to 1368; these read YVMA…FWHI, IIGL…PLIN, VLLL…LFFV, AGVF…LWLI, AAVF…QPYS, and FGIE…YLTY. Topologically, residues 1369–1394 are cytoplasmic; it reads VARIWPKVFKIITKVIPHRGKKPVQN.

This sequence belongs to the ABC transporter superfamily. ABCG family. PDR (TC 3.A.1.205) subfamily.

It is found in the membrane. In terms of biological role, transporter involved in the uptake of sterol. The sequence is that of ATP-dependent permease AUS1 (AUS1) from Saccharomyces cerevisiae (strain ATCC 204508 / S288c) (Baker's yeast).